We begin with the raw amino-acid sequence, 316 residues long: N-acetylmuramic acid 6-phosphate etherase (316 aa).

The 164-residue stretch at I66–K229 folds into the SIS domain. E94 serves as the catalytic Proton donor. Residue E125 is part of the active site.

This sequence belongs to the GCKR-like family. MurNAc-6-P etherase subfamily. In terms of assembly, homodimer.

The catalysed reaction is N-acetyl-D-muramate 6-phosphate + H2O = N-acetyl-D-glucosamine 6-phosphate + (R)-lactate. It functions in the pathway amino-sugar metabolism; 1,6-anhydro-N-acetylmuramate degradation. It participates in amino-sugar metabolism; N-acetylmuramate degradation. Its pathway is cell wall biogenesis; peptidoglycan recycling. Functionally, specifically catalyzes the cleavage of the D-lactyl ether substituent of MurNAc 6-phosphate, producing GlcNAc 6-phosphate and D-lactate. Together with AnmK, is also required for the utilization of anhydro-N-acetylmuramic acid (anhMurNAc) either imported from the medium or derived from its own cell wall murein, and thus plays a role in cell wall recycling. In Jannaschia sp. (strain CCS1), this protein is N-acetylmuramic acid 6-phosphate etherase.